The primary structure comprises 264 residues: Thymidylate synthase (264 aa).

Arginine 21 contacts dUMP. Histidine 51 is a binding site for (6R)-5,10-methylene-5,6,7,8-tetrahydrofolate. A dUMP-binding site is contributed by arginine 126–arginine 127. Cysteine 146 functions as the Nucleophile in the catalytic mechanism. Residues arginine 166–aspartate 169, asparagine 177, and histidine 207–tyrosine 209 each bind dUMP. Aspartate 169 lines the (6R)-5,10-methylene-5,6,7,8-tetrahydrofolate pocket. Alanine 263 provides a ligand contact to (6R)-5,10-methylene-5,6,7,8-tetrahydrofolate.

Belongs to the thymidylate synthase family. Bacterial-type ThyA subfamily. Homodimer.

It is found in the cytoplasm. The enzyme catalyses dUMP + (6R)-5,10-methylene-5,6,7,8-tetrahydrofolate = 7,8-dihydrofolate + dTMP. It participates in pyrimidine metabolism; dTTP biosynthesis. Functionally, catalyzes the reductive methylation of 2'-deoxyuridine-5'-monophosphate (dUMP) to 2'-deoxythymidine-5'-monophosphate (dTMP) while utilizing 5,10-methylenetetrahydrofolate (mTHF) as the methyl donor and reductant in the reaction, yielding dihydrofolate (DHF) as a by-product. This enzymatic reaction provides an intracellular de novo source of dTMP, an essential precursor for DNA biosynthesis. The polypeptide is Thymidylate synthase (Methylobacillus flagellatus (strain ATCC 51484 / DSM 6875 / VKM B-1610 / KT)).